The sequence spans 787 residues: Dolichyl-diphosphooligosaccharide--protein glycosyltransferase subunit STT3A (787 aa).

The Cytoplasmic segment spans residues 1-18 (MAEPESSTAAAGGSRLRN). The helical transmembrane segment at 19–39 (ACGGVLCAFTLLLIGVLAFSI) threads the bilayer. Residues 40 to 125 (RLFSVIKYES…LSVETVCVFT (86 aa)) are Lumenal-facing. Residues 53-55 (EFD) carry the DXD motif 1 motif. Asp55 provides a ligand contact to Mn(2+). A helical membrane pass occupies residues 126 to 144 (APIFSANASWATYLLTKEA). Residues 145–146 (KG) lie on the Cytoplasmic side of the membrane. Residues 147 to 164 (TGAGLMAAAILAMVPSYI) form a helical membrane-spanning segment. Over 165-175 (SRSVAGSYDNE) the chain is Lumenal. Asp173 and Glu175 together coordinate Mn(2+). The DXD motif 2 motif lies at 173 to 175 (DNE). Residues 176-195 (AVAIFALIFTFYLYVKTLNT) form a helical membrane-spanning segment. Topologically, residues 196–197 (GS) are cytoplasmic. Residues 198-212 (LFYATLNALSYFYMV) form a helical membrane-spanning segment. Residues 213–217 (CSWGG) are Lumenal-facing. The helical transmembrane segment at 218–234 (YTFIINLIPIHVLLCIV) threads the bilayer. At 235–239 (TGRYS) the chain is on the cytoplasmic side. The chain crosses the membrane as a helical span at residues 240–265 (SRLYIAYAPLVILGTLLAALVPVVGF). The Lumenal segment spans residues 266–273 (NAVMTSEH). Residues 274–293 (FASFLVFIILHVVALVYYIK) form a helical membrane-spanning segment. At 294 to 306 (GLLTPRLFKVAMT) the chain is on the cytoplasmic side. A helical transmembrane segment spans residues 307–327 (LVITVGLAVCFAVIAILIALV). Residues 328–365 (ASSPTKGWSGRSLSLLDPTYASKYIPIIASVSEHQPPT) lie on the Lumenal side of the membrane. The short motif at 357 to 360 (SVSE) is the SVSE motif element. Residues 366–388 (WPSYFMDINVLAFLIPAGIISCF) traverse the membrane as a helical segment. Topologically, residues 389–394 (LPLSDA) are cytoplasmic. The helical transmembrane segment at 395 to 411 (SSFVVLYLVTAVYFSGV) threads the bilayer. The Lumenal portion of the chain corresponds to 412–415 (MVRL). Residue Arg414 participates in dolichyl diphosphooligosaccharide binding. The chain crosses the membrane as a helical span at residues 416-437 (MLVLAPAACILSGIALSEAFDV). Topologically, residues 438 to 525 (LTRSVKYQLS…KLLVLPMEAS (88 aa)) are cytoplasmic. Low complexity predominate over residues 453–475 (SPAASGDSSAESSSASTVSTNSA). The interval 453 to 507 (SPAASGDSSAESSSASTVSTNSAKNETRPEKTETAPKEKPSKKNRKKEKEVAESV) is disordered. Positions 477-504 (NETRPEKTETAPKEKPSKKNRKKEKEVA) are enriched in basic and acidic residues. The chain crosses the membrane as a helical span at residues 526 to 546 (VLGILLLIVLGGFYVVHCVWA). Over 547–787 (AAEAYSAPSI…AAGRKKNPWQ (241 aa)) the chain is Lumenal. The interacts with target acceptor peptide in protein substrate stretch occupies residues 592–594 (WWD). The WWDYG motif signature appears at 592 to 596 (WWDYG). Tyr597 is a binding site for dolichyl diphosphooligosaccharide. N-linked (GlcNAc...) asparagine glycosylation is found at Asn604 and Asn611. Residue Asn615 is glycosylated (N-linked (GlcNAc...) (high mannose) asparagine). The DK motif motif lies at 659–666 (DINKFLWM). Residues 759–769 (RVRGKLKKLKS) show a composition bias toward basic residues. The segment at 759-787 (RVRGKLKKLKSGSKASSTNAAGRKKNPWQ) is disordered.

The protein belongs to the STT3 family. As to quaternary structure, component of the oligosaccharyltransferase (OST) complex. Mg(2+) serves as cofactor. Requires Mn(2+) as cofactor.

The protein localises to the endoplasmic reticulum membrane. It carries out the reaction a di-trans,poly-cis-dolichyl diphosphooligosaccharide + L-asparaginyl-[protein] = N(4)-(oligosaccharide-(1-&gt;4)-N-acetyl-beta-D-glucosaminyl-(1-&gt;4)-N-acetyl-beta-D-glucosaminyl)-L-asparaginyl-[protein] + a di-trans,poly-cis-dolichyl diphosphate + H(+). It participates in protein modification; protein glycosylation. Its function is as follows. Catalytic subunit of the oligosaccharyl transferase (OST) complex that catalyzes the initial transfer of a defined glycan (Glc(3)Man(9)GlcNAc(2) in eukaryotes) from the lipid carrier dolichol-pyrophosphate to an asparagine residue within an Asn-X-Ser/Thr consensus motif in nascent polypeptide chains, the first step in protein N-glycosylation. N-glycosylation occurs cotranslationally and the complex associates with the Sec61 complex at the channel-forming translocon complex that mediates protein translocation across the endoplasmic reticulum (ER). All subunits are required for a maximal enzyme activity. This subunit contains the active site and the acceptor peptide and donor lipid-linked oligosaccharide (LLO) binding pockets. The protein is Dolichyl-diphosphooligosaccharide--protein glycosyltransferase subunit STT3A (STT3A) of Oryza sativa subsp. japonica (Rice).